The sequence spans 536 residues: GMP synthase [glutamine-hydrolyzing] (536 aa).

The 203-residue stretch at lysine 4–aspartate 206 folds into the Glutamine amidotransferase type-1 domain. Cysteine 85 acts as the Nucleophile in catalysis. Active-site residues include histidine 180 and glutamate 182. The region spanning tryptophan 207–arginine 404 is the GMPS ATP-PPase domain. Position 234–240 (serine 234–serine 240) interacts with ATP.

In terms of assembly, homodimer.

It carries out the reaction XMP + L-glutamine + ATP + H2O = GMP + L-glutamate + AMP + diphosphate + 2 H(+). It functions in the pathway purine metabolism; GMP biosynthesis; GMP from XMP (L-Gln route): step 1/1. Catalyzes the synthesis of GMP from XMP. The protein is GMP synthase [glutamine-hydrolyzing] of Albidiferax ferrireducens (strain ATCC BAA-621 / DSM 15236 / T118) (Rhodoferax ferrireducens).